Reading from the N-terminus, the 199-residue chain is Thymidine kinase (199 aa).

Residues 15 to 22 (GSMFSGKS) and 88 to 91 (DEVQ) each bind ATP. Glu89 (proton acceptor) is an active-site residue. Cys145, Cys148, Cys183, and His186 together coordinate Zn(2+).

Belongs to the thymidine kinase family. Homotetramer.

The protein localises to the cytoplasm. The catalysed reaction is thymidine + ATP = dTMP + ADP + H(+). The chain is Thymidine kinase from Staphylococcus aureus (strain USA300).